The following is a 495-amino-acid chain: Probable cytosol aminopeptidase (495 aa).

2 residues coordinate Mn(2+): lysine 258 and aspartate 263. Lysine 270 is a catalytic residue. Aspartate 281, aspartate 340, and glutamate 342 together coordinate Mn(2+). Arginine 344 is a catalytic residue.

It belongs to the peptidase M17 family. Mn(2+) serves as cofactor.

It is found in the cytoplasm. The catalysed reaction is Release of an N-terminal amino acid, Xaa-|-Yaa-, in which Xaa is preferably Leu, but may be other amino acids including Pro although not Arg or Lys, and Yaa may be Pro. Amino acid amides and methyl esters are also readily hydrolyzed, but rates on arylamides are exceedingly low.. The enzyme catalyses Release of an N-terminal amino acid, preferentially leucine, but not glutamic or aspartic acids.. In terms of biological role, presumably involved in the processing and regular turnover of intracellular proteins. Catalyzes the removal of unsubstituted N-terminal amino acids from various peptides. This is Probable cytosol aminopeptidase from Leptospira interrogans serogroup Icterohaemorrhagiae serovar copenhageni (strain Fiocruz L1-130).